Reading from the N-terminus, the 76-residue chain is MMQLAVLICLSLVVNTFAQSCVQDSDCGNDDQCCLYSACATKPGEMFVEESGEGALAKVACSVPAPRALGFVGIHL.

Positions 1 to 18 (MMQLAVLICLSLVVNTFA) are cleaved as a signal peptide. 3 disulfides stabilise this stretch: cysteine 21–cysteine 34, cysteine 27–cysteine 39, and cysteine 33–cysteine 61.

In terms of tissue distribution, expressed by the venom gland.

It is found in the secreted. Functionally, probable ion channel inhibitor. This Hadronyche infensa (Fraser island funnel-web spider) protein is U14-hexatoxin-Hi1a.